The primary structure comprises 192 residues: Probable GTP-binding protein EngB (192 aa).

An EngB-type G domain is found at 22-192 (NLPQIVIVGR…QVLSIFEKYA (171 aa)). Residues 30–37 (GRSNVGKS), 57–61 (GKTRG), 75–78 (DLPG), 142–145 (TKAD), and 173–175 (FSA) each bind GTP. Residues Ser37 and Thr59 each coordinate Mg(2+).

This sequence belongs to the TRAFAC class TrmE-Era-EngA-EngB-Septin-like GTPase superfamily. EngB GTPase family. The cofactor is Mg(2+).

Its function is as follows. Necessary for normal cell division and for the maintenance of normal septation. The chain is Probable GTP-binding protein EngB from Thermoanaerobacter pseudethanolicus (strain ATCC 33223 / 39E) (Clostridium thermohydrosulfuricum).